The primary structure comprises 342 residues: MKALAKLERGPGLTLTRVKRPEVGHNDVLIKIRRTAICGTDIHIWKWDDWAQKTIPVPMHVGHEYVGEIVEMGQEVRGFAIGDRVSGEGHITCGFCRNCRAGRRHLCRNTVGVGVNREGAFAEYLAIPAFNAFKIPPEISDDLASIFDPFGNATHTALSFNLVGEDVLITGAGPIGIMAVAIAKHVGARNVVITDINDYRLELARKMGATRAVNVARESLRDVMADLHMTEGFDVGLEMSGVPSAFTSLLEAMNHGGKVALLGIPPAQTAIDWNQVIFKGLEIKGIYGREMFETWYKMVAMLQSGLDLSPIITHRFAADDYEQGFAAMLSGESGKVILDWTA.

Residue cysteine 38 coordinates Zn(2+). Catalysis depends on charge relay system residues threonine 40 and histidine 43. Positions 63, 64, 93, 96, 99, and 107 each coordinate Zn(2+). NAD(+) is bound by residues isoleucine 175, aspartate 195, arginine 200, 262 to 264 (LGI), and 286 to 287 (IY).

The protein belongs to the zinc-containing alcohol dehydrogenase family. In terms of assembly, homotetramer. Zn(2+) serves as cofactor.

It is found in the cytoplasm. It catalyses the reaction L-threonine + NAD(+) = (2S)-2-amino-3-oxobutanoate + NADH + H(+). It functions in the pathway amino-acid degradation; L-threonine degradation via oxydo-reductase pathway; glycine from L-threonine: step 1/2. In terms of biological role, catalyzes the NAD(+)-dependent oxidation of L-threonine to 2-amino-3-ketobutyrate. The polypeptide is L-threonine 3-dehydrogenase (Burkholderia cenocepacia (strain HI2424)).